Reading from the N-terminus, the 1320-residue chain is FERM and PDZ domain-containing protein 4 (1320 aa).

One can recognise a WW domain in the interval 33-66; sequence QVPPYGWEMMTNRDGRDYFINHMTQAIPFDDPRF. One can recognise a PDZ domain in the interval 78 to 155; that stretch reads KVEMRRDPVL…SILLTVIQPY (78 aa). One can recognise an FERM domain in the interval 204–519; sequence NVLKVYLENG…GYYRLLVDSR (316 aa). 6 disordered regions span residues 809–847, 897–927, 949–981, 1024–1050, 1114–1139, and 1204–1274; these read APPP…EIPV, YSPE…QKQS, TEFP…PPKV, KRKS…QQGT, PRGP…ADDA, and GHFS…ATFE. Positions 900–913 are enriched in low complexity; it reads ESSSDSGNETNSSE. The span at 1204-1217 shows a compositional bias: polar residues; it reads GHFSLQSSQGSSVD. Residues 1223–1232 show a composition bias toward low complexity; sequence GSSSSACATP.

In terms of assembly, interacts (via C-terminus) with DLG1, DLG2, DLG3 and DLG4/PSD95. Interacts (via N-terminus) with ARHGEF7; the interaction is mediated by the PDZ domain. Interacts with GPSM2 (via TPR repeat region). Expressed in various regions of the brain, including cortex, hippocampus, cerebellum, olfactory bulb and medial habenular nucleus.

It is found in the cell projection. The protein resides in the dendritic spine. Functionally, positive regulator of dendritic spine morphogenesis and density. Required for the maintenance of excitatory synaptic transmission. Binds phosphatidylinositol 4,5-bisphosphate. This chain is FERM and PDZ domain-containing protein 4 (Frmpd4), found in Mus musculus (Mouse).